The following is an 80-amino-acid chain: Sulfur carrier protein TusA (80 aa).

Cys-17 serves as the catalytic Cysteine persulfide intermediate.

Belongs to the sulfur carrier protein TusA family.

It localises to the cytoplasm. In terms of biological role, sulfur carrier protein which probably makes part of a sulfur-relay system. In Pseudomonas putida (strain GB-1), this protein is Sulfur carrier protein TusA.